The chain runs to 196 residues: uncharacterized protein (196 aa).

Positions 1–183 (MREFHYGVHM…RFLFILSDLG (183 aa)) constitute a Macro domain.

This sequence belongs to the MacroD-type family.

This is an uncharacterized protein from Thermoplasma acidophilum (strain ATCC 25905 / DSM 1728 / JCM 9062 / NBRC 15155 / AMRC-C165).